A 401-amino-acid polypeptide reads, in one-letter code: MTDFQFSKVEDAIEAIRQGKIILVTDDEDRENEGDFICAAEFATPENINFMATYGKGLICTPISTEIAKKLNFHPMVAVNQDNHETAFTVSVDHIDTGTGISAFERSITAMKIVDDNAKATDFRCPGHMFPLIAKDGGVLVRNGHTEATVDLARLAGLKHAGLCCEIMADDGTMMTMPDLQKFAVEHNMPFITIQQLQEYRRKHDSLVKQISVVKMPTKYGEFMAHSFVEVISGKEHVALVKGDLTDGEQVLARIHSECLTGDAFGSQRCDCGQQFAAAMTQIEQEGRGVILYLRQEGRGIGLINKLRAYELQDKGMDTVEANVALGFKEDEREYYIGAQMFQQLGVKSIRLLTNNPAKIEGLKEQGLNIVAREPIIVEPNKNDIDYLKVKQIKMGHMFNF.

A DHBP synthase region spans residues 1–203 (MTDFQFSKVE…IQQLQEYRRK (203 aa)). D-ribulose 5-phosphate is bound by residues 30 to 31 (RE), D35, 142 to 146 (RNGHT), and E166. Residue E31 coordinates Mg(2+). Position 145 (H145) interacts with Mg(2+). The segment at 204-401 (HDSLVKQISV…QIKMGHMFNF (198 aa)) is GTP cyclohydrolase II. 254-258 (RIHSE) is a GTP binding site. Zn(2+)-binding residues include C259, C270, and C272. GTP contacts are provided by residues Q275, 297-299 (EGR), and T319. D331 (proton acceptor; for GTP cyclohydrolase activity) is an active-site residue. The active-site Nucleophile; for GTP cyclohydrolase activity is R333. GTP is bound by residues T354 and K359.

The protein in the N-terminal section; belongs to the DHBP synthase family. It in the C-terminal section; belongs to the GTP cyclohydrolase II family. The cofactor is Mg(2+). It depends on Mn(2+) as a cofactor. Zn(2+) is required as a cofactor.

The enzyme catalyses D-ribulose 5-phosphate = (2S)-2-hydroxy-3-oxobutyl phosphate + formate + H(+). The catalysed reaction is GTP + 4 H2O = 2,5-diamino-6-hydroxy-4-(5-phosphoribosylamino)-pyrimidine + formate + 2 phosphate + 3 H(+). It functions in the pathway cofactor biosynthesis; riboflavin biosynthesis; 2-hydroxy-3-oxobutyl phosphate from D-ribulose 5-phosphate: step 1/1. The protein operates within cofactor biosynthesis; riboflavin biosynthesis; 5-amino-6-(D-ribitylamino)uracil from GTP: step 1/4. In terms of biological role, catalyzes the conversion of D-ribulose 5-phosphate to formate and 3,4-dihydroxy-2-butanone 4-phosphate. Its function is as follows. Catalyzes the conversion of GTP to 2,5-diamino-6-ribosylamino-4(3H)-pyrimidinone 5'-phosphate (DARP), formate and pyrophosphate. This is Riboflavin biosynthesis protein RibBA from Actinobacillus pleuropneumoniae serotype 3 (strain JL03).